The chain runs to 117 residues: Large ribosomal subunit protein uL18 (117 aa).

The protein belongs to the universal ribosomal protein uL18 family. As to quaternary structure, part of the 50S ribosomal subunit; part of the 5S rRNA/L5/L18/L25 subcomplex. Contacts the 5S and 23S rRNAs.

This is one of the proteins that bind and probably mediate the attachment of the 5S RNA into the large ribosomal subunit, where it forms part of the central protuberance. The chain is Large ribosomal subunit protein uL18 from Klebsiella pneumoniae (strain 342).